We begin with the raw amino-acid sequence, 257 residues long: Dihydroorotate dehydrogenase B (NAD(+)), electron transfer subunit (257 aa).

Residues isoleucine 2 to leucine 102 form the FAD-binding FR-type domain. FAD is bound by residues arginine 53–serine 56, isoleucine 70–arginine 72, and glycine 77–threonine 78. Residues cysteine 221, cysteine 226, cysteine 229, and cysteine 244 each coordinate [2Fe-2S] cluster.

Belongs to the PyrK family. Heterotetramer of 2 PyrK and 2 PyrD type B subunits. Requires [2Fe-2S] cluster as cofactor. FAD is required as a cofactor.

Its pathway is pyrimidine metabolism; UMP biosynthesis via de novo pathway; orotate from (S)-dihydroorotate (NAD(+) route): step 1/1. Its function is as follows. Responsible for channeling the electrons from the oxidation of dihydroorotate from the FMN redox center in the PyrD type B subunit to the ultimate electron acceptor NAD(+). This chain is Dihydroorotate dehydrogenase B (NAD(+)), electron transfer subunit, found in Bacillus caldolyticus.